The following is a 438-amino-acid chain: Adenylosuccinate synthetase (438 aa).

GTP is bound by residues 13–19 (GDEGKGK) and 41–43 (GHT). Asp-14 (proton acceptor) is an active-site residue. Mg(2+) is bound by residues Asp-14 and Gly-41. Residues 14 to 17 (DEGK), 39 to 42 (NAGH), Thr-130, Arg-144, Gln-225, Thr-240, and Arg-310 contribute to the IMP site. The active-site Proton donor is His-42. Residue 306 to 312 (ATTGRLR) participates in substrate binding. Residues Arg-312, 338–340 (KLD), and 421–423 (STG) contribute to the GTP site.

It belongs to the adenylosuccinate synthetase family. In terms of assembly, homodimer. Mg(2+) serves as cofactor.

It is found in the cytoplasm. It carries out the reaction IMP + L-aspartate + GTP = N(6)-(1,2-dicarboxyethyl)-AMP + GDP + phosphate + 2 H(+). It participates in purine metabolism; AMP biosynthesis via de novo pathway; AMP from IMP: step 1/2. Its function is as follows. Plays an important role in the de novo pathway of purine nucleotide biosynthesis. Catalyzes the first committed step in the biosynthesis of AMP from IMP. This Vibrio parahaemolyticus serotype O3:K6 (strain RIMD 2210633) protein is Adenylosuccinate synthetase.